The primary structure comprises 222 residues: Hexitol phosphatase B (222 aa).

Asp13 (nucleophile) is an active-site residue. 2 residues coordinate a divalent metal cation: Asp13 and Asp15. Residues 13–15 (DMD), 115–116 (SA), and Lys148 contribute to the substrate site. The active-site Proton donor is the Asp15. Position 173 (Asp173) interacts with a divalent metal cation.

The protein belongs to the HAD-like hydrolase superfamily. CbbY/CbbZ/Gph/YieH family. Requires Mg(2+) as cofactor. Mn(2+) is required as a cofactor. Co(2+) serves as cofactor. It depends on Zn(2+) as a cofactor.

The enzyme catalyses sugar phosphate + H2O = sugar + phosphate.. It carries out the reaction 2-deoxy-D-glucose 6-phosphate + H2O = 2-deoxy-D-glucose + phosphate. It catalyses the reaction D-mannitol 1-phosphate + H2O = D-mannitol + phosphate. The catalysed reaction is D-sorbitol 6-phosphate + H2O = D-sorbitol + phosphate. In terms of biological role, sugar-phosphate phosphohydrolase that catalyzes the dephosphorylation of D-mannitol 1-phosphate and D-sorbitol 6-phosphate. Also catalyzes the dephosphorylation of 2-deoxyglucose 6-phosphate (2dGlu6P); this is a biologically important activity in vivo since it contributes to the elimination of this toxic compound and plays an important role in the resistance of E.coli to 2-deoxyglucose. The polypeptide is Hexitol phosphatase B (Escherichia coli O157:H7).